We begin with the raw amino-acid sequence, 405 residues long: Phosphoglycerate kinase (405 aa).

Substrate-binding positions include 21–23, R38, 59–62, R116, and R156; these read DFN and HQSR. ATP is bound by residues E330 and 355-358; that span reads GGHT.

This sequence belongs to the phosphoglycerate kinase family. As to quaternary structure, monomer.

The protein resides in the cytoplasm. It carries out the reaction (2R)-3-phosphoglycerate + ATP = (2R)-3-phospho-glyceroyl phosphate + ADP. Its pathway is carbohydrate degradation; glycolysis; pyruvate from D-glyceraldehyde 3-phosphate: step 2/5. The sequence is that of Phosphoglycerate kinase from Methanocorpusculum labreanum (strain ATCC 43576 / DSM 4855 / Z).